A 163-amino-acid polypeptide reads, in one-letter code: Peptide methionine sulfoxide reductase MsrA 1 (163 aa).

Residue Cys-21 is part of the active site.

It belongs to the MsrA Met sulfoxide reductase family.

The enzyme catalyses L-methionyl-[protein] + [thioredoxin]-disulfide + H2O = L-methionyl-(S)-S-oxide-[protein] + [thioredoxin]-dithiol. It carries out the reaction [thioredoxin]-disulfide + L-methionine + H2O = L-methionine (S)-S-oxide + [thioredoxin]-dithiol. Its function is as follows. Has an important function as a repair enzyme for proteins that have been inactivated by oxidation. Catalyzes the reversible oxidation-reduction of methionine sulfoxide in proteins to methionine. This is Peptide methionine sulfoxide reductase MsrA 1 (msrA1) from Nostoc sp. (strain PCC 7120 / SAG 25.82 / UTEX 2576).